A 583-amino-acid chain; its full sequence is Capsid vertex component 2 (583 aa).

Residues 1-49 form an interaction with major capsid protein/MCP region; sequence MANFIWDARILTGDGMEMFPADVKNFIAPPWPIEFWKEPVFTSNRANME.

This sequence belongs to the herpesviridae CVC2 protein family. In terms of assembly, heterodimerizes with CVC1. Interacts with major capsid protein/MCP and triplex capsid protein 1/TRX1 at the pentamer vertices. Interacts with the large tegument protein/LTP.

Its subcellular location is the virion. It localises to the host nucleus. Capsid vertex-specific component that plays a role during viral DNA encapsidation, assuring correct genome cleavage and presumably stabilizing capsids that contain full-length viral genomes. Participates in the interaction between the capsid and the tegument through interaction with the large tegument protein/LTP. The protein is Capsid vertex component 2 of Gallus gallus (Chicken).